A 73-amino-acid polypeptide reads, in one-letter code: Large ribosomal subunit protein uL29 (73 aa).

This sequence belongs to the universal ribosomal protein uL29 family.

This is Large ribosomal subunit protein uL29 (rpmC) from Aquifex aeolicus (strain VF5).